We begin with the raw amino-acid sequence, 102 residues long: uncharacterized protein (102 aa).

A run of 2 helical transmembrane segments spans residues 24-44 and 55-75; these read AFIV…PVLT and IGAV…TWIL.

It is found in the cell membrane. This is an uncharacterized protein from Bacillus subtilis (strain 168).